The chain runs to 79 residues: Conotoxin TsMSGL-2 (79 aa).

The N-terminal stretch at 1–24 is a signal peptide; sequence MSGLGIMVLTLLLLVFMATSHQDA. A propeptide spanning residues 25–46 is cleaved from the precursor; the sequence is GEKQATQRDAVNVRRRRSIAGR. Cystine bridges form between cysteine 52–cysteine 64, cysteine 56–cysteine 73, and cysteine 63–cysteine 77. Residue leucine 78 is modified to Leucine amide.

The protein belongs to the conotoxin O3 superfamily. In terms of tissue distribution, expressed by the venom duct.

Its subcellular location is the secreted. The protein is Conotoxin TsMSGL-2 of Conus tessulatus (Tessellate cone).